A 247-amino-acid polypeptide reads, in one-letter code: Complement C1q subcomponent subunit A (247 aa).

The signal sequence occupies residues 1–24; the sequence is MEAPRGWLVIMISVLAVSLASSAA. The segment at 26-116 is disordered; that stretch reads DTCRDLDGRD…NPGNIKDQRR (91 aa). The span at 27–38 shows a compositional bias: basic and acidic residues; it reads TCRDLDGRDGAA. The 79-residue stretch at 33–111 folds into the Collagen-like domain; that stretch reads GRDGAARKPG…KGIKGNPGNI (79 aa). Proline 41 and proline 47 each carry 4-hydroxyproline. 5-hydroxylysine is present on lysine 50. Residue lysine 50 is glycosylated (O-linked (Gal...) hydroxylysine). Residues proline 56 and proline 59 each carry the 4-hydroxyproline modification. The residue at position 69 (lysine 69) is a 5-hydroxylysine. Lysine 69 carries O-linked (Gal...) hydroxylysine glycosylation. Proline 81 and proline 87 each carry 4-hydroxyproline. The span at 98-109 shows a compositional bias: low complexity; that stretch reads LPGLKGIKGNPG. Lysine 102 bears the 5-hydroxylysine mark. A glycan (O-linked (Gal...) hydroxylysine) is linked at lysine 102. The 136-residue stretch at 112–247 folds into the C1q domain; that stretch reads KDQRRPAFSA…FSGFLIFPST (136 aa). Residues cysteine 174 and cysteine 192 are joined by a disulfide bond. Residue glutamine 201 participates in Ca(2+) binding.

In terms of assembly, core component of the complement C1 complex, a calcium-dependent complex composed of 1 molecule of the C1Q subcomplex, 2 molecules of C1R and 2 molecules of C1S. The C1Q subcomplex is composed 18 subunits: 3 chains of C1QA, C1QB, and C1QC trimerize to form 6 collagen-like triple helices connected to six globular ligand-recognition modules (C1q domain). Interacts with CR1 (via Sushi 24 and Sushi 25 domains). Interacts (via C-terminus) with CD33; this interaction activates CD33 inhibitory motifs. Post-translationally, O-linked glycans are assumed to be the Glc-Gal disaccharides typically found as secondary modifications of hydroxylated lysines in collagen-like domains.

The protein localises to the secreted. Its subcellular location is the cell surface. With respect to regulation, the C1Q subcomplex is inhibited by sulfated molecules, such as triterpenoid sulfates, heparan sulfate, or chondroitin sulfates. In terms of biological role, core component of the complement C1 complex, a multiprotein complex that initiates the classical pathway of the complement system, a cascade of proteins that leads to phagocytosis and breakdown of pathogens and signaling that strengthens the adaptive immune system. The classical complement pathway is initiated by the C1Q subcomplex of the C1 complex, which specifically binds IgG or IgM immunoglobulins complexed with antigens, forming antigen-antibody complexes on the surface of pathogens: C1QA, together with C1QB and C1QC, specifically recognizes and binds the Fc regions of IgG or IgM via its C1q domain. Immunoglobulin-binding activates the proenzyme C1R, which cleaves C1S, initiating the proteolytic cascade of the complement system. The C1Q subcomplex is activated by a hexamer of IgG complexed with antigens, while it is activated by a pentameric IgM. The C1Q subcomplex also recognizes and binds phosphatidylserine exposed on the surface of cells undergoing programmed cell death, possibly promoting activation of the complement system. The polypeptide is Complement C1q subcomponent subunit A (C1QA) (Sus scrofa (Pig)).